A 133-amino-acid chain; its full sequence is Small ribosomal subunit protein uS9 (133 aa).

The disordered stretch occupies residues 102–133 (KPKGLLTRDPREVERKKYGLKKARRAPQFSKR). The span at 107 to 118 (LTRDPREVERKK) shows a compositional bias: basic and acidic residues. Basic residues predominate over residues 119 to 133 (YGLKKARRAPQFSKR).

The protein belongs to the universal ribosomal protein uS9 family.

The sequence is that of Small ribosomal subunit protein uS9 from Deinococcus deserti (strain DSM 17065 / CIP 109153 / LMG 22923 / VCD115).